The sequence spans 357 residues: Sulfate/thiosulfate import ATP-binding protein CysA (357 aa).

Positions I3–L237 constitute an ABC transporter domain. G35–T42 is an ATP binding site.

This sequence belongs to the ABC transporter superfamily. Sulfate/tungstate importer (TC 3.A.1.6) family. As to quaternary structure, the complex is composed of two ATP-binding proteins (CysA), two transmembrane proteins (CysT and CysW) and a solute-binding protein (CysP).

The protein localises to the cell membrane. The enzyme catalyses sulfate(out) + ATP + H2O = sulfate(in) + ADP + phosphate + H(+). The catalysed reaction is thiosulfate(out) + ATP + H2O = thiosulfate(in) + ADP + phosphate + H(+). Its function is as follows. Part of the ABC transporter complex CysAWTP involved in sulfate/thiosulfate import. Responsible for energy coupling to the transport system. This chain is Sulfate/thiosulfate import ATP-binding protein CysA, found in Bacillus cereus (strain ATCC 10987 / NRS 248).